The primary structure comprises 93 residues: Regulatory protein RepI (93 aa).

Its function is as follows. This protein is involved in regulating the plasmid copy-number. Increasing the level of this protein results in a higher plasmid copy-number. The chain is Regulatory protein RepI (repI) from Escherichia coli.